The following is a 185-amino-acid chain: ATP synthase subunit b, chloroplastic (185 aa).

Residues 31–53 (IINITVVLGILIYFGKGVLSNLL) traverse the membrane as a helical segment.

This sequence belongs to the ATPase B chain family. In terms of assembly, F-type ATPases have 2 components, F(1) - the catalytic core - and F(0) - the membrane proton channel. F(1) has five subunits: alpha(3), beta(3), gamma(1), delta(1), epsilon(1). F(0) has four main subunits: a(1), b(1), b'(1) and c(10-14). The alpha and beta chains form an alternating ring which encloses part of the gamma chain. F(1) is attached to F(0) by a central stalk formed by the gamma and epsilon chains, while a peripheral stalk is formed by the delta, b and b' chains.

Its subcellular location is the plastid. It localises to the chloroplast thylakoid membrane. Its function is as follows. F(1)F(0) ATP synthase produces ATP from ADP in the presence of a proton or sodium gradient. F-type ATPases consist of two structural domains, F(1) containing the extramembraneous catalytic core and F(0) containing the membrane proton channel, linked together by a central stalk and a peripheral stalk. During catalysis, ATP synthesis in the catalytic domain of F(1) is coupled via a rotary mechanism of the central stalk subunits to proton translocation. In terms of biological role, component of the F(0) channel, it forms part of the peripheral stalk, linking F(1) to F(0). The chain is ATP synthase subunit b, chloroplastic from Gnetum parvifolium (Small-leaved jointfir).